The chain runs to 499 residues: Probable inactive receptor-like protein kinase At3g56050 (499 aa).

The signal sequence occupies residues 1-31 (MSNNWKSVRLRLQNRTLVFLLVILSFGSCYS). Asparagine 14 is a glycosylation site (N-linked (GlcNAc...) asparagine). The Extracellular segment spans residues 32 to 146 (LKSQGDGFLE…SKTSSNSTIP (115 aa)). A disordered region spans residues 80–121 (RDRPVARATPPSSSVSTRPDAKRSSTLPPPQKSPPAQHVSAP). N-linked (GlcNAc...) asparagine glycosylation is present at asparagine 142. A helical transmembrane segment spans residues 147 to 167 (IVAGCIAGAVFILLLATGVFF). Residues 168–499 (FKSKAGKSVN…WAELEVLSTA (332 aa)) lie on the Cytoplasmic side of the membrane. One can recognise a Protein kinase domain in the interval 208–474 (EDFSNVIGSC…EVTGRLREIT (267 aa)).

It localises to the cell membrane. This Arabidopsis thaliana (Mouse-ear cress) protein is Probable inactive receptor-like protein kinase At3g56050.